The sequence spans 383 residues: Probable tRNA sulfurtransferase (383 aa).

One can recognise a THUMP domain in the interval 58-158; it reads NEIIHILKMI…ENKSYVWFDK (101 aa). ATP-binding positions include 176-177, 201-202, Arg259, Gly281, and Gln290; these read LL and TF.

Belongs to the ThiI family.

It localises to the cytoplasm. It carries out the reaction [ThiI sulfur-carrier protein]-S-sulfanyl-L-cysteine + a uridine in tRNA + 2 reduced [2Fe-2S]-[ferredoxin] + ATP + H(+) = [ThiI sulfur-carrier protein]-L-cysteine + a 4-thiouridine in tRNA + 2 oxidized [2Fe-2S]-[ferredoxin] + AMP + diphosphate. The catalysed reaction is [ThiS sulfur-carrier protein]-C-terminal Gly-Gly-AMP + S-sulfanyl-L-cysteinyl-[cysteine desulfurase] + AH2 = [ThiS sulfur-carrier protein]-C-terminal-Gly-aminoethanethioate + L-cysteinyl-[cysteine desulfurase] + A + AMP + 2 H(+). The protein operates within cofactor biosynthesis; thiamine diphosphate biosynthesis. Its function is as follows. Catalyzes the ATP-dependent transfer of a sulfur to tRNA to produce 4-thiouridine in position 8 of tRNAs, which functions as a near-UV photosensor. Also catalyzes the transfer of sulfur to the sulfur carrier protein ThiS, forming ThiS-thiocarboxylate. This is a step in the synthesis of thiazole, in the thiamine biosynthesis pathway. The sulfur is donated as persulfide by IscS. The protein is Probable tRNA sulfurtransferase of Malacoplasma penetrans (strain HF-2) (Mycoplasma penetrans).